A 1058-amino-acid polypeptide reads, in one-letter code: SMC5-SMC6 complex localization factor protein 1 (1058 aa).

2 consecutive BRCT domains span residues 12–77 (MTGF…IHSA) and 119–196 (GAPG…GDFL). Positions 410-1058 (PRGVLNLIES…MMCRSVMEFS (649 aa)) are NSE5-like domain; mediates interaction with SLF2. ANK repeat units lie at residues 806–836 (KGET…DINV), 840–869 (AGWT…EVDL), and 874–903 (DGVT…PVLL). A Glycyl lysine isopeptide (Lys-Gly) (interchain with G-Cter in SUMO2) cross-link involves residue Lys931.

Interacts (via N-terminus) with SLF2; this interaction links RAD18 to the SMC5-SMC6 complex. Interacts (via BRCT domains) with RAD18; this interaction occurs in a SLF2-independent manner. Interacts with SMC6. Interacts (via BRCT domains) with RAD18 (via C-terminus and phosphorylated form); this interaction is required for efficient repair of UV-induced DNA damage.

It localises to the nucleus. The protein localises to the cytoplasm. Its subcellular location is the cytoskeleton. The protein resides in the microtubule organizing center. It is found in the centrosome. Functionally, plays a role in the DNA damage response (DDR) pathway by regulating postreplication repair of UV-damaged DNA and genomic stability maintenance. The SLF1-SLF2 complex acts to link RAD18 with the SMC5-SMC6 complex at replication-coupled interstrand cross-links (ICL) and DNA double-strand breaks (DSBs) sites on chromatin during DNA repair in response to stalled replication forks. Promotes the recruitment of SLF2 and the SMC5-SMC6 complex to DNA lesions. The polypeptide is SMC5-SMC6 complex localization factor protein 1 (Homo sapiens (Human)).